Here is a 507-residue protein sequence, read N- to C-terminus: MATLRADEISNIIRERIEQYTREVKVVNTGTVLQVGDGIARIHGLDEVMAGELVEFEEGTIGIALNLESNNVGVVLMGDGLTIQEGSSVKATGRIAQIPVSEAYLGRVVNALAKPIDGRGEIAASEFRLIESPAPGIISRRSVYEPLQTGLIAIDSMIPVGRGQRELIIGDRQTGKTAVATDTILNQKGQNVICVYVAIGQKASSVAQVVTNFQERGAMEYTIVVAETADSPATLQYLAPYTGAALAEYFMYRERHTSIIYDDLSKQAQAYRQMSLLLRRPPGREAYPGDVFYLHSRLLERAAKSSSRLGEGSMTALPIVETQSGDVSAYIPTNVISITDGQIFLSADLFNAGIRPAINVGISVSRVGSAAQIKAMKQVAGKSKLELAQFAELEAFAQFASDLDKATQNQLARGKRLRELLKQSQSEPLAVDEQVVTIYTGTNGYLDTLEIGQVKEFLVKLRTYLKKNKPQFQEIISSTKTFTEEAEALLKEAIQEQLELFLLQEQT.

170–177 (GDRQTGKT) serves as a coordination point for ATP.

Belongs to the ATPase alpha/beta chains family. As to quaternary structure, F-type ATPases have 2 components, CF(1) - the catalytic core - and CF(0) - the membrane proton channel. CF(1) has five subunits: alpha(3), beta(3), gamma(1), delta(1), epsilon(1). CF(0) has four main subunits: a, b, b' and c.

The protein localises to the plastid. It is found in the chloroplast thylakoid membrane. The catalysed reaction is ATP + H2O + 4 H(+)(in) = ADP + phosphate + 5 H(+)(out). Produces ATP from ADP in the presence of a proton gradient across the membrane. The alpha chain is a regulatory subunit. The polypeptide is ATP synthase subunit alpha, chloroplastic (Acorus calamus var. americanus (American sweet flag)).